A 111-amino-acid chain; its full sequence is Large ribosomal subunit protein uL24 (111 aa).

Positions 43 to 62 (TRHKKKDQTTKRAAKQSTGK) are disordered.

It belongs to the universal ribosomal protein uL24 family. Part of the 50S ribosomal subunit.

Functionally, one of two assembly initiator proteins, it binds directly to the 5'-end of the 23S rRNA, where it nucleates assembly of the 50S subunit. In terms of biological role, one of the proteins that surrounds the polypeptide exit tunnel on the outside of the subunit. The chain is Large ribosomal subunit protein uL24 from Mycoplasma pneumoniae (strain ATCC 29342 / M129 / Subtype 1) (Mycoplasmoides pneumoniae).